A 120-amino-acid chain; its full sequence is NAD(P)H-quinone oxidoreductase subunit 3, chloroplastic (120 aa).

The next 3 membrane-spanning stretches (helical) occupy residues 9-29 (IFWA…XISG), 64-84 (MFAL…PWAM), and 88-108 (VLGV…IVGL).

Belongs to the complex I subunit 3 family. NDH is composed of at least 16 different subunits, 5 of which are encoded in the nucleus.

The protein resides in the plastid. It localises to the chloroplast thylakoid membrane. The enzyme catalyses a plastoquinone + NADH + (n+1) H(+)(in) = a plastoquinol + NAD(+) + n H(+)(out). It carries out the reaction a plastoquinone + NADPH + (n+1) H(+)(in) = a plastoquinol + NADP(+) + n H(+)(out). Functionally, NDH shuttles electrons from NAD(P)H:plastoquinone, via FMN and iron-sulfur (Fe-S) centers, to quinones in the photosynthetic chain and possibly in a chloroplast respiratory chain. The immediate electron acceptor for the enzyme in this species is believed to be plastoquinone. Couples the redox reaction to proton translocation, and thus conserves the redox energy in a proton gradient. The chain is NAD(P)H-quinone oxidoreductase subunit 3, chloroplastic from Eucalyptus globulus subsp. globulus (Tasmanian blue gum).